Here is a 507-residue protein sequence, read N- to C-terminus: MRNTLIPILVAICLFITGVAILNIQLWYSAKAEYLAGARYAANNINHILEEASQATQTAVNIAGKECNLEEQYQLGTEAALKPHLRTIIILKQGIVWCTSLPGNRVLLSRIPVFPDSNLLLAPAIDTVNRLPILLYQNQFADTRILVTISDQHIRGALNVPLKGVRYVLRVADDIIGPTGDVMTLNGHYPYTEKVHSTKYHFTIIFNPPPLFSFYRLIDKGFGILIFILLIACAAAFLLDRYFNKSATPEEILRRAINNGEIVPFYQPVVNGREGTLRGVEVLARWKQPHGGYISPAAFIPLAEKSGLIVPLTQSLMNQVARQMNAIASKLPEGFHIGINFSASHIISPTFVDECLNFRDSFTRRDLNLVLEVTEREPLNVDESLVQRLNILHENGFVIALDDFGTGYSGLSYLHDLHIDYIKIDHSFVGRVNADPESTRILDCVLDLARKLSISIVAEGVETKEQLDYLNQNYITFQQGYYFYKPVTYIDLVKIILSKPKVKVVVE.

Helical transmembrane passes span 4–24 (TLIPILVAICLFITGVAILNI) and 217–237 (LIDKGFGILIFILLIACAAAF). One can recognise an EAL domain in the interval 246–500 (SATPEEILRR…DLVKIILSKP (255 aa)).

It is found in the cell membrane. It carries out the reaction 3',3'-c-di-GMP + H2O = 5'-phosphoguanylyl(3'-&gt;5')guanosine + H(+). Its function is as follows. Phosphodiesterase (PDE) that catalyzes the hydrolysis of cyclic-di-GMP (c-di-GMP) to 5'-pGpG. The protein is Probable cyclic di-GMP phosphodiesterase PdeG of Escherichia coli (strain K12).